The following is a 38-amino-acid chain: Mu/omega-theraphotoxin-Mb1b (38 aa).

Intrachain disulfides connect cysteine 7-cysteine 21, cysteine 14-cysteine 26, and cysteine 20-cysteine 33. Serine 38 bears the Serine amide mark.

Belongs to the neurotoxin 10 (Hwtx-1) family. 28 (Jztx-11) subfamily. Expressed by the venom gland.

Its subcellular location is the secreted. Paralytic toxin on insects that inhibits voltage-gated sodium (Nav) and calcium (Cav) channels in P.americana (American cockroach) dorsal unpaired median (DUM) neurons, and also inhibits the B.germanica (German cockroach) Nav channel (BgNaV1). May act as a gating-modifier toxin on Nav and as a pore blocker on Cav. In vivo, reversibly paralyzes both L.cuprina (Australian sheep blowfly) and M.domestica (housefly), but does not affect larvae of H.armigera (cotton bollworms). The chain is Mu/omega-theraphotoxin-Mb1b from Monocentropus balfouri (Socotra Island blue baboon tarantula).